The sequence spans 82 residues: Sec-independent protein translocase protein TatA (82 aa).

The helical transmembrane segment at 1–21 (MGGISIWQLLIIAVIIVLLFG) threads the bilayer. The tract at residues 48–82 (PAKEAKKDADFVPQNLEKKEAETVEKQKQNDKEQA) is disordered.

This sequence belongs to the TatA/E family. In terms of assembly, the Tat system comprises two distinct complexes: a TatABC complex, containing multiple copies of TatA, TatB and TatC subunits, and a separate TatA complex, containing only TatA subunits. Substrates initially bind to the TatABC complex, which probably triggers association of the separate TatA complex to form the active translocon.

The protein resides in the cell inner membrane. Functionally, part of the twin-arginine translocation (Tat) system that transports large folded proteins containing a characteristic twin-arginine motif in their signal peptide across membranes. TatA could form the protein-conducting channel of the Tat system. The polypeptide is Sec-independent protein translocase protein TatA (Aliivibrio fischeri (strain ATCC 700601 / ES114) (Vibrio fischeri)).